Consider the following 256-residue polypeptide: Ubiquinone/menaquinone biosynthesis C-methyltransferase UbiE (256 aa).

Residues threonine 79, aspartate 100, and 128-129 each bind S-adenosyl-L-methionine; that span reads DA.

Belongs to the class I-like SAM-binding methyltransferase superfamily. MenG/UbiE family.

It catalyses the reaction a 2-demethylmenaquinol + S-adenosyl-L-methionine = a menaquinol + S-adenosyl-L-homocysteine + H(+). It carries out the reaction a 2-methoxy-6-(all-trans-polyprenyl)benzene-1,4-diol + S-adenosyl-L-methionine = a 5-methoxy-2-methyl-3-(all-trans-polyprenyl)benzene-1,4-diol + S-adenosyl-L-homocysteine + H(+). It participates in quinol/quinone metabolism; menaquinone biosynthesis; menaquinol from 1,4-dihydroxy-2-naphthoate: step 2/2. Its pathway is cofactor biosynthesis; ubiquinone biosynthesis. Its function is as follows. Methyltransferase required for the conversion of demethylmenaquinol (DMKH2) to menaquinol (MKH2) and the conversion of 2-polyprenyl-6-methoxy-1,4-benzoquinol (DDMQH2) to 2-polyprenyl-3-methyl-6-methoxy-1,4-benzoquinol (DMQH2). In Pseudomonas fluorescens (strain SBW25), this protein is Ubiquinone/menaquinone biosynthesis C-methyltransferase UbiE.